A 293-amino-acid chain; its full sequence is Small ribosomal subunit protein uS5 (293 aa).

Residues 1–56 (MADDAGAAGGPGGPGGPGMGGRGGFRGGFGSGVRGRGRGRGRGRGRGRGARGGKAE) form a disordered region. N-acetylalanine is present on Ala2. Gly residues predominate over residues 7 to 34 (AAGGPGGPGGPGMGGRGGFRGGFGSGVR). Basic residues predominate over residues 35-51 (GRGRGRGRGRGRGRGAR). Glycyl lysine isopeptide (Lys-Gly) (interchain with G-Cter in ubiquitin) cross-links involve residues Lys54 and Lys58. The 64-residue stretch at 102–165 (LKDEVLKIMP…ILAKLSIVPV (64 aa)) folds into the S5 DRBM domain. Position 252 is a phosphothreonine (Thr252). Lys263 carries the N6-acetyllysine modification. Ser264 carries the post-translational modification Phosphoserine. At Thr270 the chain carries Phosphothreonine. Lys275 carries the N6-acetyllysine; alternate modification. Lys275 is covalently cross-linked (Glycyl lysine isopeptide (Lys-Gly) (interchain with G-Cter in SUMO1); alternate). A Glycyl lysine isopeptide (Lys-Gly) (interchain with G-Cter in SUMO2); alternate cross-link involves residue Lys275. Residue Lys275 forms a Glycyl lysine isopeptide (Lys-Gly) (interchain with G-Cter in ubiquitin); alternate linkage. Residue Ser281 is modified to Phosphoserine.

It belongs to the universal ribosomal protein uS5 family. In terms of assembly, component of the small ribosomal subunit. Interacts with zinc finger protein ZNF277 (via zinc-finger domains); the interaction is direct; the interaction is extra-ribosomal. Interaction with ZNF277 competes with the binding of RPS2 to protein arginine methyltransferase PRMT3. Citrullinated by PADI4 in the Arg/Gly-rich region. In terms of processing, asymmetric arginine dimethylation by PRMT3 occurs at multiple sites in the Arg/Gly-rich region. Post-translationally, monoubiquitinated at Lys-54 and Lys-58 by RNF10 when a ribosome has stalled during translation, leading to its degradation by the proteasome. Deubiquitinated at Lys-54 and Lys-58 by USP10, preventing degradation by the proteasome and promoting 40S ribosome subunit recycling following ribosome dissociation.

The protein localises to the cytoplasm. It localises to the nucleus. The protein resides in the nucleolus. Functionally, component of the ribosome, a large ribonucleoprotein complex responsible for the synthesis of proteins in the cell. The small ribosomal subunit (SSU) binds messenger RNAs (mRNAs) and translates the encoded message by selecting cognate aminoacyl-transfer RNA (tRNA) molecules. The large subunit (LSU) contains the ribosomal catalytic site termed the peptidyl transferase center (PTC), which catalyzes the formation of peptide bonds, thereby polymerizing the amino acids delivered by tRNAs into a polypeptide chain. The nascent polypeptides leave the ribosome through a tunnel in the LSU and interact with protein factors that function in enzymatic processing, targeting, and the membrane insertion of nascent chains at the exit of the ribosomal tunnel. Plays a role in the assembly and function of the 40S ribosomal subunit. Mutations in this protein affects the control of translational fidelity. Involved in nucleolar processing of pre-18S ribosomal RNA and ribosome assembly. This chain is Small ribosomal subunit protein uS5 (RPS2), found in Bos taurus (Bovine).